We begin with the raw amino-acid sequence, 478 residues long: Endoglucanase 18 (478 aa).

The signal sequence occupies residues 1-21 (MGKLLVVMLIGMFLAFESLEA). The N-linked (GlcNAc...) asparagine glycan is linked to Asn-29. Asp-76 functions as the Nucleophile in the catalytic mechanism. The active site involves His-398. A disordered region spans residues 433 to 452 (HTGAIVGGPNSSDQYSDKRT). N-linked (GlcNAc...) asparagine glycosylation occurs at Asn-442. Catalysis depends on residues Asp-449 and Glu-458.

This sequence belongs to the glycosyl hydrolase 9 (cellulase E) family.

The protein localises to the secreted. It carries out the reaction Endohydrolysis of (1-&gt;4)-beta-D-glucosidic linkages in cellulose, lichenin and cereal beta-D-glucans.. The protein is Endoglucanase 18 of Arabidopsis thaliana (Mouse-ear cress).